The chain runs to 270 residues: 27 kDa core protein (270 aa).

Belongs to the chordopoxvirinae D3 family.

It is found in the virion. Its function is as follows. Late protein which is part of a large complex required for early virion morphogenesis. This complex participates in the formation of virosomes and the incorporation of virosomal contents into nascent immature virions. This is 27 kDa core protein from Vertebrata (FPV).